A 302-amino-acid polypeptide reads, in one-letter code: MARRALDGVLLLDKPVGLSSNDALMRAKRLYQAKKAGHTGTLDPLASGLLPLCFGEATKFSQDLLEADKTYEATMRLGVRTTTGDAEGDVLDTRDVSCDEAAVRAALARFVGEIVQVPPMYSALKRDGKPLYEYARAGQTVEREGRTVTIRALALVSCALPDVTFRVTCSKGTYVRTLAEDIGEALGCGAHLTMLRRTGVGPLTLEHAVTLDALDAATQDERDARLAPVDALLSTFPCVKLDAALATRFLHGQRLKLSELAARPDAAEGGRVRVYDADDRLLGVARASEGVLAPERLVVTGA.

Asp-43 (nucleophile) is an active-site residue.

Belongs to the pseudouridine synthase TruB family. Type 1 subfamily.

The enzyme catalyses uridine(55) in tRNA = pseudouridine(55) in tRNA. Functionally, responsible for synthesis of pseudouridine from uracil-55 in the psi GC loop of transfer RNAs. The protein is tRNA pseudouridine synthase B of Burkholderia mallei (strain NCTC 10247).